A 292-amino-acid chain; its full sequence is Bifunctional protein FolD 1 (292 aa).

An NADP(+)-binding site is contributed by 165–167; the sequence is GRS.

This sequence belongs to the tetrahydrofolate dehydrogenase/cyclohydrolase family. As to quaternary structure, homodimer.

It catalyses the reaction (6R)-5,10-methylene-5,6,7,8-tetrahydrofolate + NADP(+) = (6R)-5,10-methenyltetrahydrofolate + NADPH. The enzyme catalyses (6R)-5,10-methenyltetrahydrofolate + H2O = (6R)-10-formyltetrahydrofolate + H(+). The protein operates within one-carbon metabolism; tetrahydrofolate interconversion. Functionally, catalyzes the oxidation of 5,10-methylenetetrahydrofolate to 5,10-methenyltetrahydrofolate and then the hydrolysis of 5,10-methenyltetrahydrofolate to 10-formyltetrahydrofolate. The polypeptide is Bifunctional protein FolD 1 (Myxococcus xanthus (strain DK1622)).